The chain runs to 432 residues: Enolase (432 aa).

Residue Gln-163 participates in (2R)-2-phosphoglycerate binding. Glu-205 (proton donor) is an active-site residue. Asp-242, Glu-288, and Asp-315 together coordinate Mg(2+). 4 residues coordinate (2R)-2-phosphoglycerate: Lys-340, Arg-369, Ser-370, and Lys-391. Lys-340 functions as the Proton acceptor in the catalytic mechanism.

It belongs to the enolase family. As to quaternary structure, homodimer. It depends on Mg(2+) as a cofactor.

The protein resides in the cytoplasm. Its subcellular location is the secreted. It localises to the cell surface. The enzyme catalyses (2R)-2-phosphoglycerate = phosphoenolpyruvate + H2O. It functions in the pathway carbohydrate degradation; glycolysis; pyruvate from D-glyceraldehyde 3-phosphate: step 4/5. The covalent binding to the substrate causes inactivation of the enzyme, and possibly serves as a signal for the export of the protein. Catalyzes the reversible conversion of 2-phosphoglycerate (2-PG) into phosphoenolpyruvate (PEP). It is essential for the degradation of carbohydrates via glycolysis. The chain is Enolase from Enterococcus hirae.